A 589-amino-acid chain; its full sequence is ATP-dependent lipid A-core flippase (589 aa).

Transmembrane regions (helical) follow at residues 37–57, 72–92, 151–171, 173–193, 260–280, and 286–306; these read ALAI…PALL, LWLV…SGFL, IMKL…LVYL, WKLM…IQVL, SAIT…IALL, and TTTV…IAPV. An ABC transmembrane type-1 domain is found at 37 to 318; the sequence is ALAIGATIVA…LSDAATPVTR (282 aa). The ABC transporter domain occupies 350 to 584; that stretch reads IEFADVSVIY…NGAYAHLYRL (235 aa). Residue 384–391 coordinates ATP; that stretch reads GASGSGKT.

This sequence belongs to the ABC transporter superfamily. Lipid exporter (TC 3.A.1.106) family. Homodimer.

It is found in the cell inner membrane. The enzyme catalyses ATP + H2O + lipid A-core oligosaccharideSide 1 = ADP + phosphate + lipid A-core oligosaccharideSide 2.. In terms of biological role, involved in lipopolysaccharide (LPS) biosynthesis. Translocates lipid A-core from the inner to the outer leaflet of the inner membrane. Transmembrane domains (TMD) form a pore in the inner membrane and the ATP-binding domain (NBD) is responsible for energy generation. The polypeptide is ATP-dependent lipid A-core flippase (Polaromonas sp. (strain JS666 / ATCC BAA-500)).